A 195-amino-acid chain; its full sequence is Holliday junction branch migration complex subunit RuvA (195 aa).

The segment at 1-62 (MIEFVKGPVA…EDQQTLYGFR (62 aa)) is domain I. Residues 63 to 141 (SRRERELFNK…ELAPDYVPNE (79 aa)) are domain II. Residues 141–145 (EGLFA) are flexible linker. The interval 146–195 (QGASELDEACEALVALGYSEREIAKVRKALSGEILTTDAYIKRALQLLLK) is domain III.

It belongs to the RuvA family. Homotetramer. Forms an RuvA(8)-RuvB(12)-Holliday junction (HJ) complex. HJ DNA is sandwiched between 2 RuvA tetramers; dsDNA enters through RuvA and exits via RuvB. An RuvB hexamer assembles on each DNA strand where it exits the tetramer. Each RuvB hexamer is contacted by two RuvA subunits (via domain III) on 2 adjacent RuvB subunits; this complex drives branch migration. In the full resolvosome a probable DNA-RuvA(4)-RuvB(12)-RuvC(2) complex forms which resolves the HJ.

The protein localises to the cytoplasm. Its function is as follows. The RuvA-RuvB-RuvC complex processes Holliday junction (HJ) DNA during genetic recombination and DNA repair, while the RuvA-RuvB complex plays an important role in the rescue of blocked DNA replication forks via replication fork reversal (RFR). RuvA specifically binds to HJ cruciform DNA, conferring on it an open structure. The RuvB hexamer acts as an ATP-dependent pump, pulling dsDNA into and through the RuvAB complex. HJ branch migration allows RuvC to scan DNA until it finds its consensus sequence, where it cleaves and resolves the cruciform DNA. The sequence is that of Holliday junction branch migration complex subunit RuvA from Exiguobacterium sp. (strain ATCC BAA-1283 / AT1b).